Reading from the N-terminus, the 43-residue chain is Iota-conotoxin-like Fi11.6 (43 aa).

4 disulfide bridges follow: Cys-2/Cys-16, Cys-9/Cys-19, Cys-15/Cys-24, and Cys-18/Cys-35. Residue Pro-8 is modified to 4-hydroxyproline. Position 26 is a 4-hydroxyproline (Pro-26). Trp-30 bears the 6'-bromotryptophan mark. Phe-41 carries the post-translational modification D-phenylalanine.

Belongs to the conotoxin I1 superfamily. Expressed by the venom duct.

The protein resides in the secreted. Functionally, iota-conotoxins bind to voltage-gated sodium channels (Nav) and act as agonists by shifting the voltage-dependence of activation to more hyperpolarized levels. Produces general excitatory symptoms. This is Iota-conotoxin-like Fi11.6 from Conus figulinus (Fig cone).